The sequence spans 117 residues: Hydrogenase maturation factor HypA (117 aa).

Residue His2 participates in Ni(2+) binding. Cys74, Cys77, Cys91, and Cys94 together coordinate Zn(2+).

This sequence belongs to the HypA/HybF family.

Its function is as follows. Involved in the maturation of [NiFe] hydrogenases. Required for nickel insertion into the metal center of the hydrogenase. In Helicobacter pylori (strain J99 / ATCC 700824) (Campylobacter pylori J99), this protein is Hydrogenase maturation factor HypA.